Consider the following 304-residue polypeptide: Aspartate carbamoyltransferase catalytic subunit (304 aa).

The carbamoyl phosphate site is built by arginine 55 and threonine 56. An L-aspartate-binding site is contributed by lysine 84. Carbamoyl phosphate-binding residues include arginine 105, histidine 133, and glutamine 136. L-aspartate contacts are provided by arginine 165 and arginine 226. Carbamoyl phosphate is bound by residues leucine 265 and proline 266.

It belongs to the aspartate/ornithine carbamoyltransferase superfamily. ATCase family. As to quaternary structure, heterooligomer of catalytic and regulatory chains.

It carries out the reaction carbamoyl phosphate + L-aspartate = N-carbamoyl-L-aspartate + phosphate + H(+). Its pathway is pyrimidine metabolism; UMP biosynthesis via de novo pathway; (S)-dihydroorotate from bicarbonate: step 2/3. Functionally, catalyzes the condensation of carbamoyl phosphate and aspartate to form carbamoyl aspartate and inorganic phosphate, the committed step in the de novo pyrimidine nucleotide biosynthesis pathway. In Methanothrix thermoacetophila (strain DSM 6194 / JCM 14653 / NBRC 101360 / PT) (Methanosaeta thermophila), this protein is Aspartate carbamoyltransferase catalytic subunit.